A 193-amino-acid polypeptide reads, in one-letter code: Ion-translocating oxidoreductase complex subunit A (193 aa).

6 helical membrane-spanning segments follow: residues 5-25 (LLLF…FLGL), 39-59 (IGMG…AWMV), 62-82 (FILL…LVIA), 102-122 (LLGI…VALL), 134-154 (AVYG…FAAI), and 171-191 (SIAL…TGLV).

Belongs to the NqrDE/RnfAE family. In terms of assembly, the complex is composed of six subunits: RnfA, RnfB, RnfC, RnfD, RnfE and RnfG.

It localises to the cell inner membrane. In terms of biological role, part of a membrane-bound complex that couples electron transfer with translocation of ions across the membrane. In Yersinia pestis bv. Antiqua (strain Nepal516), this protein is Ion-translocating oxidoreductase complex subunit A.